The following is a 309-amino-acid chain: Fructosamine-3-kinase (309 aa).

Position 1 is an N-acetylmethionine (Met1). Position 89-91 (89-91) interacts with ATP; that stretch reads EHL. Asp217 serves as the catalytic Proton acceptor.

This sequence belongs to the fructosamine kinase family. In terms of assembly, monomer. As to expression, widely expressed. Expressed in erythrocytes.

It catalyses the reaction N(6)-(D-fructosyl)-L-lysyl-[protein] + ATP = N(6)-(3-O-phospho-D-fructosyl)-L-lysyl-[protein] + ADP + H(+). The catalysed reaction is N(6)-D-ribulosyl-L-lysyl-[protein] + ATP = N(6)-(3-O-phospho-D-ribulosyl)-L-lysyl-[protein] + ADP + H(+). The enzyme catalyses N(6)-(D-psicosyl)-L-lysyl-[protein] + ATP = N(6)-(3-O-phospho-D-psicosyl)-L-lysyl-[protein] + ADP + H(+). Functionally, fructosamine-3-kinase involved in protein deglycation by mediating phosphorylation of fructoselysine residues on glycated proteins, to generate fructoselysine-3 phosphate. Fructoselysine-3 phosphate adducts are unstable and decompose under physiological conditions. Involved in intracellular deglycation in erythrocytes. Involved in the response to oxidative stress by mediating deglycation of NFE2L2/NRF2, glycation impairing NFE2L2/NRF2 function. Also able to phosphorylate psicosamines and ribulosamines. The polypeptide is Fructosamine-3-kinase (Homo sapiens (Human)).